The chain runs to 355 residues: Arginine kinase (355 aa).

Residues 8–90 form the Phosphagen kinase N-terminal domain; sequence KLQAGFKKLE…FDPIIEDYHV (83 aa). 63 to 67 is a binding site for L-arginine; sequence GVGIY. Residues 118–355 form the Phosphagen kinase C-terminal domain; that stretch reads YVISTRVRCG…LQLIKMEKEM (238 aa). ATP-binding positions include 121–125 and H184; that span reads STRVR. Position 224 (E224) interacts with L-arginine. R228 contributes to the ATP binding site. An L-arginine-binding site is contributed by C270. Residues 279–283 and 308–313 contribute to the ATP site; these read RASVH and RGTRGE. E313 is a binding site for L-arginine.

The protein belongs to the ATP:guanido phosphotransferase family. As to quaternary structure, monomer.

It carries out the reaction L-arginine + ATP = N(omega)-phospho-L-arginine + ADP + H(+). The sequence is that of Arginine kinase from Penaeus japonicus (Kuruma prawn).